A 517-amino-acid polypeptide reads, in one-letter code: GMP synthase [glutamine-hydrolyzing] (517 aa).

Positions arginine 9 to leucine 199 constitute a Glutamine amidotransferase type-1 domain. Cysteine 86 serves as the catalytic Nucleophile. Active-site residues include histidine 173 and glutamate 175. Residues tryptophan 200–arginine 392 form the GMPS ATP-PPase domain. ATP is bound at residue serine 227–serine 233.

Homodimer.

It catalyses the reaction XMP + L-glutamine + ATP + H2O = GMP + L-glutamate + AMP + diphosphate + 2 H(+). Its pathway is purine metabolism; GMP biosynthesis; GMP from XMP (L-Gln route): step 1/1. In terms of biological role, catalyzes the synthesis of GMP from XMP. This is GMP synthase [glutamine-hydrolyzing] from Vibrio campbellii (strain ATCC BAA-1116).